Reading from the N-terminus, the 341-residue chain is Paired box protein Pax-9 (341 aa).

The segment at residues 4 to 130 (AFGEVNQLGG…SSISRILRNK (127 aa)) is a DNA-binding region (paired). The interval 7-63 (EVNQLGGVFVNGRPLPNAIRLRIVELAQLGIRPCDISRQLRVSHGCVSKILARYNET) is PAI subdomain. An RED subdomain region spans residues 82–130 (TVVKHIRTYKQRDPGIFAWEIRDRLLADGVCDKYNVPSVSSISRILRNK). The tract at residues 168–189 (AAAAKVPTPPGVPAIPGSVAMP) is interaction with KDM5B.

In terms of assembly, interacts with KDM5B.

It is found in the nucleus. Functionally, transcription factor required for normal development of thymus, parathyroid glands, ultimobranchial bodies, teeth, skeletal elements of skull and larynx as well as distal limbs. This chain is Paired box protein Pax-9 (PAX9), found in Saguinus oedipus (Cotton-top tamarin).